A 275-amino-acid polypeptide reads, in one-letter code: Light-independent protochlorophyllide reductase iron-sulfur ATP-binding protein (275 aa).

Residues 12 to 17 (GIGKST) and Lys41 contribute to the ATP site. Ser16 contacts Mg(2+). Residues Cys97 and Cys131 each coordinate [4Fe-4S] cluster. 182 to 183 (NR) lines the ATP pocket.

It belongs to the NifH/BchL/ChlL family. In terms of assembly, homodimer. Protochlorophyllide reductase is composed of three subunits; BchL, BchN and BchB. [4Fe-4S] cluster is required as a cofactor.

It carries out the reaction chlorophyllide a + oxidized 2[4Fe-4S]-[ferredoxin] + 2 ADP + 2 phosphate = protochlorophyllide a + reduced 2[4Fe-4S]-[ferredoxin] + 2 ATP + 2 H2O. It functions in the pathway porphyrin-containing compound metabolism; bacteriochlorophyll biosynthesis (light-independent). Component of the dark-operative protochlorophyllide reductase (DPOR) that uses Mg-ATP and reduced ferredoxin to reduce ring D of protochlorophyllide (Pchlide) to form chlorophyllide a (Chlide). This reaction is light-independent. The L component serves as a unique electron donor to the NB-component of the complex, and binds Mg-ATP. The chain is Light-independent protochlorophyllide reductase iron-sulfur ATP-binding protein from Chlorobium phaeobacteroides (strain BS1).